Consider the following 451-residue polypeptide: Bifunctional protein GlmU (451 aa).

Positions 1–229 are pyrophosphorylase; it reads MQRHAIVLAA…FEEIMGVNDR (229 aa). UDP-N-acetyl-alpha-D-glucosamine is bound by residues 8–11, Lys22, Gln72, and 77–78; these read LAAG and GT. Asp102 contacts Mg(2+). UDP-N-acetyl-alpha-D-glucosamine contacts are provided by Gly139, Glu154, and Asn227. Asn227 contacts Mg(2+). Residues 230-250 are linker; that stretch reads VMLSEAEKAFRKRINEQHMKN. The segment at 251-451 is N-acetyltransferase; that stretch reads GVTIIDPVTT…QTTKEGYLKK (201 aa). UDP-N-acetyl-alpha-D-glucosamine-binding residues include Arg332 and Lys350. His362 functions as the Proton acceptor in the catalytic mechanism. UDP-N-acetyl-alpha-D-glucosamine is bound by residues Tyr365 and Asn376. Acetyl-CoA is bound by residues 385-386, Ala422, and Arg439; that span reads NY.

In the N-terminal section; belongs to the N-acetylglucosamine-1-phosphate uridyltransferase family. This sequence in the C-terminal section; belongs to the transferase hexapeptide repeat family. Homotrimer. Requires Mg(2+) as cofactor.

The protein resides in the cytoplasm. The enzyme catalyses alpha-D-glucosamine 1-phosphate + acetyl-CoA = N-acetyl-alpha-D-glucosamine 1-phosphate + CoA + H(+). It catalyses the reaction N-acetyl-alpha-D-glucosamine 1-phosphate + UTP + H(+) = UDP-N-acetyl-alpha-D-glucosamine + diphosphate. The protein operates within nucleotide-sugar biosynthesis; UDP-N-acetyl-alpha-D-glucosamine biosynthesis; N-acetyl-alpha-D-glucosamine 1-phosphate from alpha-D-glucosamine 6-phosphate (route II): step 2/2. It participates in nucleotide-sugar biosynthesis; UDP-N-acetyl-alpha-D-glucosamine biosynthesis; UDP-N-acetyl-alpha-D-glucosamine from N-acetyl-alpha-D-glucosamine 1-phosphate: step 1/1. It functions in the pathway bacterial outer membrane biogenesis; LPS lipid A biosynthesis. Functionally, catalyzes the last two sequential reactions in the de novo biosynthetic pathway for UDP-N-acetylglucosamine (UDP-GlcNAc). The C-terminal domain catalyzes the transfer of acetyl group from acetyl coenzyme A to glucosamine-1-phosphate (GlcN-1-P) to produce N-acetylglucosamine-1-phosphate (GlcNAc-1-P), which is converted into UDP-GlcNAc by the transfer of uridine 5-monophosphate (from uridine 5-triphosphate), a reaction catalyzed by the N-terminal domain. This is Bifunctional protein GlmU from Staphylococcus saprophyticus subsp. saprophyticus (strain ATCC 15305 / DSM 20229 / NCIMB 8711 / NCTC 7292 / S-41).